The chain runs to 300 residues: Peroxisomal 2,4-dienoyl-CoA reductase [(3E)-enoyl-CoA-producing] (300 aa).

NADP(+) is bound by residues 42 to 47 (GGGSGI), 67 to 71 (RNLEK), and Asp-93. A substrate-binding site is contributed by Arg-67. Residues Arg-95, Phe-125, and 133–135 (SFN) contribute to the substrate site. NADP(+) contacts are provided by residues Lys-189 and 215–221 (PGPISGT). Arg-226 provides a ligand contact to substrate. The short motif at 298-300 (AKL) is the Microbody targeting signal element.

Belongs to the short-chain dehydrogenases/reductases (SDR) family. 2,4-dienoyl-CoA reductase subfamily. Monomer, dimer and oligomer.

It localises to the peroxisome. The enzyme catalyses a (2E,4Z)-dienoyl-CoA + NADPH + H(+) = a 4,5-saturated-(3E)-enoyl-CoA + NADP(+). The catalysed reaction is a (2E,4E)-dienoyl-CoA + NADPH + H(+) = a 4,5-saturated-(3E)-enoyl-CoA + NADP(+). It catalyses the reaction (2E,4E)-hexadienoyl-CoA + NADPH + H(+) = (3E)-hexenoyl-CoA + NADP(+). It carries out the reaction (2E,4E)-decadienoyl-CoA + NADPH + H(+) = (3E)-decenoyl-CoA + NADP(+). The enzyme catalyses (2E,4Z,7Z,10Z,13Z,16Z,19Z)-docosaheptaenoyl-CoA + NADPH + H(+) = (3E,7Z,10Z,13Z,16Z,19Z)-docosahexaenoyl-CoA + NADP(+). Auxiliary enzyme of beta-oxidation. Participates in the degradation of unsaturated fatty enoyl-CoA esters having double bonds in both even- and odd-numbered positions in peroxisome. Catalyzes the NADP-dependent reduction of 2,4-dienoyl-CoA to yield trans-3-enoyl-CoA. The protein is Peroxisomal 2,4-dienoyl-CoA reductase [(3E)-enoyl-CoA-producing] (decr2) of Danio rerio (Zebrafish).